We begin with the raw amino-acid sequence, 205 residues long: Regulatory protein RecX (205 aa).

This sequence belongs to the RecX family.

It is found in the cytoplasm. In terms of biological role, modulates RecA activity. The protein is Regulatory protein RecX of Finegoldia magna (strain ATCC 29328 / DSM 20472 / WAL 2508) (Peptostreptococcus magnus).